We begin with the raw amino-acid sequence, 336 residues long: 3-isopropylmalate dehydrogenase (336 aa).

Residues Arg-87, Arg-97, Arg-121, and Asp-211 each contribute to the substrate site. Residues Asp-211, Asp-235, and Asp-239 each coordinate Mg(2+). 271–283 is an NAD(+) binding site; it reads GSAPDIAGQGVAD.

The protein belongs to the isocitrate and isopropylmalate dehydrogenases family. LeuB type 2 subfamily. As to quaternary structure, homodimer. Mg(2+) is required as a cofactor. It depends on Mn(2+) as a cofactor.

It localises to the cytoplasm. The catalysed reaction is (2R,3S)-3-isopropylmalate + NAD(+) = 4-methyl-2-oxopentanoate + CO2 + NADH. The protein operates within amino-acid biosynthesis; L-leucine biosynthesis; L-leucine from 3-methyl-2-oxobutanoate: step 3/4. Functionally, catalyzes the oxidation of 3-carboxy-2-hydroxy-4-methylpentanoate (3-isopropylmalate) to 3-carboxy-4-methyl-2-oxopentanoate. The product decarboxylates to 4-methyl-2 oxopentanoate. This chain is 3-isopropylmalate dehydrogenase, found in Mycobacterium avium (strain 104).